Reading from the N-terminus, the 214-residue chain is Uracil phosphoribosyltransferase (214 aa).

5-phospho-alpha-D-ribose 1-diphosphate contacts are provided by residues R107 and 135–143; that span reads DPMLATGKT. Residues I198 and 203–205 each bind uracil; that span reads GDA. Position 204 (D204) interacts with 5-phospho-alpha-D-ribose 1-diphosphate.

The protein belongs to the UPRTase family. Mg(2+) is required as a cofactor.

The catalysed reaction is UMP + diphosphate = 5-phospho-alpha-D-ribose 1-diphosphate + uracil. It participates in pyrimidine metabolism; UMP biosynthesis via salvage pathway; UMP from uracil: step 1/1. Allosterically activated by GTP. Functionally, catalyzes the conversion of uracil and 5-phospho-alpha-D-ribose 1-diphosphate (PRPP) to UMP and diphosphate. This is Uracil phosphoribosyltransferase from Aeropyrum pernix (strain ATCC 700893 / DSM 11879 / JCM 9820 / NBRC 100138 / K1).